The sequence spans 411 residues: Tyrosine--tRNA ligase (411 aa).

The short motif at 48–57 is the 'HIGH' region element; that stretch reads PTAPDIHLGH. The 'KMSKS' region motif lies at 232-236; sequence KMSKS. Lys235 is a binding site for ATP. The 63-residue stretch at 347-409 folds into the S4 RNA-binding domain; the sequence is VLLPKVLFSA…GKRRFLKIIF (63 aa).

It belongs to the class-I aminoacyl-tRNA synthetase family. TyrS type 2 subfamily. In terms of assembly, homodimer.

The protein localises to the cytoplasm. The catalysed reaction is tRNA(Tyr) + L-tyrosine + ATP = L-tyrosyl-tRNA(Tyr) + AMP + diphosphate + H(+). Its function is as follows. Catalyzes the attachment of tyrosine to tRNA(Tyr) in a two-step reaction: tyrosine is first activated by ATP to form Tyr-AMP and then transferred to the acceptor end of tRNA(Tyr). The protein is Tyrosine--tRNA ligase of Carboxydothermus hydrogenoformans (strain ATCC BAA-161 / DSM 6008 / Z-2901).